The primary structure comprises 455 residues: Glutamyl-tRNA reductase (455 aa).

Substrate contacts are provided by residues threonine 49–arginine 52, serine 109, glutamate 114–glutamine 116, and glutamine 120. Cysteine 50 acts as the Nucleophile in catalysis. Position 190 to 195 (glycine 190 to glycine 195) interacts with NADP(+).

This sequence belongs to the glutamyl-tRNA reductase family. Homodimer.

It carries out the reaction (S)-4-amino-5-oxopentanoate + tRNA(Glu) + NADP(+) = L-glutamyl-tRNA(Glu) + NADPH + H(+). It participates in porphyrin-containing compound metabolism; protoporphyrin-IX biosynthesis; 5-aminolevulinate from L-glutamyl-tRNA(Glu): step 1/2. In terms of biological role, catalyzes the NADPH-dependent reduction of glutamyl-tRNA(Glu) to glutamate 1-semialdehyde (GSA). In Salinispora tropica (strain ATCC BAA-916 / DSM 44818 / JCM 13857 / NBRC 105044 / CNB-440), this protein is Glutamyl-tRNA reductase.